A 311-amino-acid chain; its full sequence is tRNA-cytidine(32) 2-sulfurtransferase (311 aa).

Positions 47–52 (SGGKDS) match the PP-loop motif motif. Residues cysteine 122, cysteine 125, and cysteine 213 each contribute to the [4Fe-4S] cluster site.

This sequence belongs to the TtcA family. As to quaternary structure, homodimer. It depends on Mg(2+) as a cofactor. Requires [4Fe-4S] cluster as cofactor.

It localises to the cytoplasm. The enzyme catalyses cytidine(32) in tRNA + S-sulfanyl-L-cysteinyl-[cysteine desulfurase] + AH2 + ATP = 2-thiocytidine(32) in tRNA + L-cysteinyl-[cysteine desulfurase] + A + AMP + diphosphate + H(+). It participates in tRNA modification. In terms of biological role, catalyzes the ATP-dependent 2-thiolation of cytidine in position 32 of tRNA, to form 2-thiocytidine (s(2)C32). The sulfur atoms are provided by the cysteine/cysteine desulfurase (IscS) system. The protein is tRNA-cytidine(32) 2-sulfurtransferase of Escherichia coli (strain 55989 / EAEC).